The following is a 106-amino-acid chain: Large ribosomal subunit protein uL24 (106 aa).

Belongs to the universal ribosomal protein uL24 family. In terms of assembly, part of the 50S ribosomal subunit.

One of two assembly initiator proteins, it binds directly to the 5'-end of the 23S rRNA, where it nucleates assembly of the 50S subunit. Functionally, one of the proteins that surrounds the polypeptide exit tunnel on the outside of the subunit. In Gluconobacter oxydans (strain 621H) (Gluconobacter suboxydans), this protein is Large ribosomal subunit protein uL24.